Consider the following 261-residue polypeptide: Tryptophan synthase alpha chain (261 aa).

Residues E47 and D58 each act as proton acceptor in the active site.

This sequence belongs to the TrpA family. As to quaternary structure, tetramer of two alpha and two beta chains.

The enzyme catalyses (1S,2R)-1-C-(indol-3-yl)glycerol 3-phosphate + L-serine = D-glyceraldehyde 3-phosphate + L-tryptophan + H2O. Its pathway is amino-acid biosynthesis; L-tryptophan biosynthesis; L-tryptophan from chorismate: step 5/5. Its function is as follows. The alpha subunit is responsible for the aldol cleavage of indoleglycerol phosphate to indole and glyceraldehyde 3-phosphate. The protein is Tryptophan synthase alpha chain of Neisseria meningitidis serogroup B (strain ATCC BAA-335 / MC58).